Consider the following 676-residue polypeptide: DNA ligase (676 aa).

NAD(+) contacts are provided by residues 35–39, 84–85, and Glu-115; these read DNEYD and SL. The N6-AMP-lysine intermediate role is filled by Lys-117. Arg-138, Glu-177, Lys-294, and Lys-318 together coordinate NAD(+). Zn(2+) contacts are provided by Cys-412, Cys-415, Cys-430, and Cys-436. One can recognise a BRCT domain in the interval 595–676; sequence PTRQPLNGES…FLAFLAQYSA (82 aa).

It belongs to the NAD-dependent DNA ligase family. LigA subfamily. Requires Mg(2+) as cofactor. The cofactor is Mn(2+).

The catalysed reaction is NAD(+) + (deoxyribonucleotide)n-3'-hydroxyl + 5'-phospho-(deoxyribonucleotide)m = (deoxyribonucleotide)n+m + AMP + beta-nicotinamide D-nucleotide.. Functionally, DNA ligase that catalyzes the formation of phosphodiester linkages between 5'-phosphoryl and 3'-hydroxyl groups in double-stranded DNA using NAD as a coenzyme and as the energy source for the reaction. It is essential for DNA replication and repair of damaged DNA. The polypeptide is DNA ligase (Acinetobacter baylyi (strain ATCC 33305 / BD413 / ADP1)).